A 91-amino-acid chain; its full sequence is Small ribosomal subunit protein bS6 (91 aa).

The protein belongs to the bacterial ribosomal protein bS6 family.

Its function is as follows. Binds together with bS18 to 16S ribosomal RNA. This chain is Small ribosomal subunit protein bS6, found in Leptospira biflexa serovar Patoc (strain Patoc 1 / Ames).